A 524-amino-acid chain; its full sequence is MEVFMFPTGTTVIISVLSVLLAVIPWYLLNKLWLKPKRFEKLLKAQGFQGEPYNLSVLKDKSKQNYMLKLQQEDKSKSIGLSKEAAPSIFTPVHQTVRKYGNNSFLWEGTTPRVIITDPDQIKDVFNKIDDFPKPKLRSIAKYLSVGILDHEGKKWAKHRKIANPAFHLEKLKVMLPAFSHSCNEMISKWKELLSSDGTCEIDVWPSLQNFTCDVISRTAFGSSYAEGTKLFQLLKKQGFLLMTGRHTNNPLWGLLATTTKTKMKEIDREIHDSLEGIIEKREKALKNGETTNDDLLGILLQSNHAEKQGQGNSKNIGMTTQDVIDECKLFYLAGQETTSSLLVWTMVLLGRYPEWQARAREEVLQVFGNQNPNNEGLSQLKIVTMILYEVLRLFPPLIYFNRALRKDLKLGNLLLPEGTQISLPILLIHQDHDLWGDDAKEFKPERFAEGIAKATKGQVSYFPFGWGPRICLGQNFALLEAKIAVSLLLQNFSFELSPNYVHVPTTVLTLQPKNGASIILHKL.

The chain crosses the membrane as a helical span at residues 9 to 29 (GTTVIISVLSVLLAVIPWYLL). Heme is bound at residue Cys472.

The protein belongs to the cytochrome P450 family. Heme is required as a cofactor. As to expression, expressed in flowers. Detected in roots upon salt treatment.

The protein resides in the membrane. It catalyses the reaction 11-oxo-beta-amyrin + 3 reduced [NADPH--hemoprotein reductase] + 3 O2 = glycyrrhetinate + 3 oxidized [NADPH--hemoprotein reductase] + 4 H2O + 4 H(+). Involved in the biosynthesis of triterpenoid saponins. Catalyzes three sequential oxidation steps at C-30 of 11-oxo-beta-amyrin. Also able to catalyze sequential C-30 hydroxylation of beta-amyrin to produce 30-hydroxy-beta-amyrin and 11-deoxoglycyrrhetinic acid. The chain is 11-oxo-beta-amyrin 30-oxidase (CYP72A63) from Medicago truncatula (Barrel medic).